Consider the following 42-residue polypeptide: Iota-conotoxin-like R11.1 (42 aa).

4 disulfides stabilise this stretch: Cys-5-Cys-19, Cys-12-Cys-22, Cys-18-Cys-27, and Cys-21-Cys-36.

It belongs to the conotoxin I1 superfamily. As to expression, expressed by the venom duct.

The protein localises to the secreted. Functionally, iota-conotoxins bind to voltage-gated sodium channels (Nav) and act as agonists by shifting the voltage-dependence of activation to more hyperpolarized levels. Produces general excitatory symptoms. The protein is Iota-conotoxin-like R11.1 of Conus radiatus (Rayed cone).